A 472-amino-acid chain; its full sequence is Arabinose-proton symporter (472 aa).

Residues 1–29 (MVTINTESALTPRSLRDTRRMNMFVSVAA) lie on the Cytoplasmic side of the membrane. Residues 30-50 (AVAGLLFGLDIGVIAGALPFI) traverse the membrane as a helical segment. The Periplasmic segment spans residues 51 to 63 (TDHFVLTSRLQEW). A helical transmembrane segment spans residues 64–84 (VVSSMMLGAAIGALFNGWLSF). The Cytoplasmic segment spans residues 85-91 (RLGRKYS). A helical transmembrane segment spans residues 92-112 (LMAGAILFVLGSIGSAFATSV). The Periplasmic portion of the chain corresponds to 113–114 (EM). The helical transmembrane segment at 115–135 (LIAARVVLGIAVGIASYTAPL) threads the bilayer. The Cytoplasmic portion of the chain corresponds to 136–154 (YLSEMASENVRGKMISMYQ). Residues 155-175 (LMVTLGIVLAFLSDTAFSYSG) form a helical membrane-spanning segment. Residues 176 to 178 (NWR) lie on the Periplasmic side of the membrane. Residues 179–199 (AMLGVLALPAVLLIILVVFLP) form a helical membrane-spanning segment. The Cytoplasmic segment spans residues 200 to 257 (NSPRWLAEKGRHIEAEEVLRMLRDTSEKAREELNEIRESLKLKQGGWALFKINRNVRR). A helical membrane pass occupies residues 258 to 278 (AVFLGMLLQAMQQFTGMNIIM). Topologically, residues 279–297 (YYAPRIFKMAGFTTTEQQM) are periplasmic. A helical membrane pass occupies residues 298-318 (IATLVVGLTFMFATFIAVFTV). The Cytoplasmic portion of the chain corresponds to 319–325 (DKAGRKP). A helical transmembrane segment spans residues 326-346 (ALKIGFSVMALGTLVLGYCLM). Over 347–361 (QFDNGTASSGLSWLS) the chain is Periplasmic. A helical transmembrane segment spans residues 362-382 (VGMTMMCIAGYAMSAAPVVWI). At 383-404 (LCSEIQPLKCRDFGITCSTTTN) the chain is on the cytoplasmic side. The next 2 membrane-spanning stretches (helical) occupy residues 405-425 (WVSN…IGAA) and 426-446 (GTFW…FWLI). At 447–472 (PETKNVTLEHIERKLMAGEKLRNIGV) the chain is on the cytoplasmic side.

Belongs to the major facilitator superfamily. Sugar transporter (TC 2.A.1.1) family.

It localises to the cell inner membrane. The enzyme catalyses L-arabinose(in) + H(+)(in) = L-arabinose(out) + H(+)(out). In terms of biological role, uptake of L-arabinose across the cytoplasmic membrane with the concomitant transport of protons into the cell (symport system). The chain is Arabinose-proton symporter (araE) from Escherichia coli O157:H7.